We begin with the raw amino-acid sequence, 214 residues long: Ribonuclease S-2 (214 aa).

A signal peptide spans 1–22 (MSKSQLTSVFFILLCALSPIYG). Cys38 and Cys43 form a disulfide bridge. The N-linked (GlcNAc...) asparagine glycan is linked to Asn49. His53 acts as the Proton donor in catalysis. His53 serves as a coordination point for RNA. Asn59 carries N-linked (GlcNAc...) asparagine glycosylation. An intrachain disulfide couples Cys67 to Cys116. Residues 91-92 (DL), Lys94, and Phe105 contribute to the RNA site. The active site involves Glu109. 112-113 (KH) provides a ligand contact to RNA. His113 acts as the Proton acceptor in catalysis. The N-linked (GlcNAc...) asparagine glycan is linked to Asn160. Disulfide bonds link Cys175/Cys204 and Cys187/Cys198.

Belongs to the RNase T2 family.

It localises to the secreted. The protein resides in the extracellular space. It carries out the reaction a ribonucleotidyl-ribonucleotide-RNA + H2O = a 3'-end 3'-phospho-ribonucleotide-RNA + a 5'-end dephospho-ribonucleoside-RNA + H(+). In terms of biological role, self-incompatibility (SI) is the inherited ability of a flowering plant to prevent self-fertilization by discriminating between self and non-self pollen during pollination. In many species of the Solanaceae, self-incompatibility is controlled by the single, multiallelic locus S. This stylar glycoprotein is associated with expression of self-incompatibility in potato. The sequence is that of Ribonuclease S-2 (S-2) from Nicotiana alata (Winged tobacco).